The following is a 109-amino-acid chain: uncharacterized protein (109 aa).

This is an uncharacterized protein from Methanocaldococcus jannaschii (strain ATCC 43067 / DSM 2661 / JAL-1 / JCM 10045 / NBRC 100440) (Methanococcus jannaschii).